Here is a 563-residue protein sequence, read N- to C-terminus: Lipoprotein LpqB (563 aa).

Positions 1–19 are cleaved as a signal peptide; it reads MRRMKALTAAMTAALLVSG. A lipid anchor (N-palmitoyl cysteine) is attached at Cys20. Cys20 carries S-diacylglycerol cysteine lipidation.

It belongs to the LpqB lipoprotein family.

Its subcellular location is the cell membrane. In Corynebacterium efficiens (strain DSM 44549 / YS-314 / AJ 12310 / JCM 11189 / NBRC 100395), this protein is Lipoprotein LpqB.